The following is a 294-amino-acid chain: Glycine--tRNA ligase alpha subunit (294 aa).

This sequence belongs to the class-II aminoacyl-tRNA synthetase family. As to quaternary structure, tetramer of two alpha and two beta subunits.

Its subcellular location is the cytoplasm. The catalysed reaction is tRNA(Gly) + glycine + ATP = glycyl-tRNA(Gly) + AMP + diphosphate. The sequence is that of Glycine--tRNA ligase alpha subunit from Sulfurovum sp. (strain NBC37-1).